The sequence spans 215 residues: dITP/XTP pyrophosphatase (215 aa).

Substrate is bound at residue 13–18 (THNIGK). D74 acts as the Proton acceptor in catalysis. D74 serves as a coordination point for Mg(2+). Residues S75, 163–166 (FGFD), K186, and 199–200 (HR) each bind substrate.

This sequence belongs to the HAM1 NTPase family. As to quaternary structure, homodimer. Requires Mg(2+) as cofactor.

The enzyme catalyses XTP + H2O = XMP + diphosphate + H(+). It carries out the reaction dITP + H2O = dIMP + diphosphate + H(+). It catalyses the reaction ITP + H2O = IMP + diphosphate + H(+). In terms of biological role, pyrophosphatase that catalyzes the hydrolysis of nucleoside triphosphates to their monophosphate derivatives, with a high preference for the non-canonical purine nucleotides XTP (xanthosine triphosphate), dITP (deoxyinosine triphosphate) and ITP. Seems to function as a house-cleaning enzyme that removes non-canonical purine nucleotides from the nucleotide pool, thus preventing their incorporation into DNA/RNA and avoiding chromosomal lesions. The sequence is that of dITP/XTP pyrophosphatase from Bartonella henselae (strain ATCC 49882 / DSM 28221 / CCUG 30454 / Houston 1) (Rochalimaea henselae).